Reading from the N-terminus, the 262-residue chain is 3-deoxy-manno-octulosonate cytidylyltransferase (262 aa).

It belongs to the KdsB family.

It localises to the cytoplasm. It carries out the reaction 3-deoxy-alpha-D-manno-oct-2-ulosonate + CTP = CMP-3-deoxy-beta-D-manno-octulosonate + diphosphate. It functions in the pathway nucleotide-sugar biosynthesis; CMP-3-deoxy-D-manno-octulosonate biosynthesis; CMP-3-deoxy-D-manno-octulosonate from 3-deoxy-D-manno-octulosonate and CTP: step 1/1. The protein operates within bacterial outer membrane biogenesis; lipopolysaccharide biosynthesis. Activates KDO (a required 8-carbon sugar) for incorporation into bacterial lipopolysaccharide in Gram-negative bacteria. This chain is 3-deoxy-manno-octulosonate cytidylyltransferase, found in Koribacter versatilis (strain Ellin345).